The chain runs to 124 residues: Small ribosomal subunit protein uS12 (124 aa).

A 3-methylthioaspartic acid modification is found at aspartate 89. Lysine 108 carries the post-translational modification N6-acetyllysine.

This sequence belongs to the universal ribosomal protein uS12 family. Part of the 30S ribosomal subunit. Contacts proteins S8 and S17. May interact with IF1 in the 30S initiation complex.

Functionally, with S4 and S5 plays an important role in translational accuracy. Its function is as follows. Interacts with and stabilizes bases of the 16S rRNA that are involved in tRNA selection in the A site and with the mRNA backbone. Located at the interface of the 30S and 50S subunits, it traverses the body of the 30S subunit contacting proteins on the other side and probably holding the rRNA structure together. The combined cluster of proteins S8, S12 and S17 appears to hold together the shoulder and platform of the 30S subunit. This Escherichia coli O6:K15:H31 (strain 536 / UPEC) protein is Small ribosomal subunit protein uS12.